We begin with the raw amino-acid sequence, 620 residues long: MSFDIAKYPTLALVDSTQELRLLPKESLPKLCDELRRYLLDSVSRSSGHFASGLGTVELTVALHYVYNTPFDQLIWDVGHQAYPHKILTGRRDKIGTIRQKGGLHPFPWRGESEYDVLSVGHSSTSISAGIGIAVAAEKEGKDRHTVCVIGDGAITAGMAFEAMNHAGDIRPDMLVILNDNEMSISENVGALNNHLAQLLSGKLYSSLREGGKKVFSGVPPIKELLKRTEEHIKGMVVPGTLFEELGFNYIGPVDGHDVMGLISTLKNMRDLKGPQFLHIMTKKGRGYEPAEKDPITFHAVPKFDPSSGCLPKSSGGLPGYSKIFGDWLCETAAKDSKLMAITPAMREGSGMVEFSRKFPDRYFDVAIAEQHAVTFAAGLAIGGYKPVVAIYSTFLQRAYDQVIHDVAIQKLPVMFAIDRAGIVGADGQTHQGAFDLSYLRCIPDMVIMTPSDENECRQMLFTGYHYNDGPTAVRYPRGNAQGVALTPLEKLPIGKGLVKRHGEKLAILNFGTLMPEAAKVAEALNATLVDMRFVKPLDDTLILEMAAQHDALVTLEENAIMGGAGSGVNEVLMAHRKPVPVLNIGLPDLFIPQGTQEEARAELGLDAAGIEAKIKAWQA.

Thiamine diphosphate-binding positions include histidine 80 and glycine 121–serine 123. Aspartate 152 provides a ligand contact to Mg(2+). Thiamine diphosphate is bound by residues glycine 153–alanine 154, asparagine 181, tyrosine 288, and glutamate 370. Asparagine 181 lines the Mg(2+) pocket.

Belongs to the transketolase family. DXPS subfamily. Homodimer. It depends on Mg(2+) as a cofactor. Thiamine diphosphate serves as cofactor.

It catalyses the reaction D-glyceraldehyde 3-phosphate + pyruvate + H(+) = 1-deoxy-D-xylulose 5-phosphate + CO2. Its pathway is metabolic intermediate biosynthesis; 1-deoxy-D-xylulose 5-phosphate biosynthesis; 1-deoxy-D-xylulose 5-phosphate from D-glyceraldehyde 3-phosphate and pyruvate: step 1/1. Its function is as follows. Catalyzes the acyloin condensation reaction between C atoms 2 and 3 of pyruvate and glyceraldehyde 3-phosphate to yield 1-deoxy-D-xylulose-5-phosphate (DXP). In Salmonella paratyphi A (strain ATCC 9150 / SARB42), this protein is 1-deoxy-D-xylulose-5-phosphate synthase.